The sequence spans 65 residues: Small hydrophobic protein (65 aa).

The Intravirion portion of the chain corresponds to 1–20 (MGNTSITIEFTSKFWPYFTL). Positions 6-15 (ITIEFTSKFW) are interaction with host BCAP31. A helical; Signal-anchor for type II membrane protein transmembrane segment spans residues 21–44 (IHMILTLISLLIIITIMIAILNKL). The interaction with small-molecule inhibitor stretch occupies residues 38-43 (IAILNK). Over 45–65 (SEHKTFCNNTLELGQMHQINT) the chain is Virion surface. N-linked (GlcNAc...) asparagine; by host glycosylation occurs at Asn-52.

Belongs to the orthopneumovirus small hydrophobic protein family. As to quaternary structure, homopentamer forming a funnel-like pore. Interacts with glycoprotein G; this interaction occurs on the surface of virion particles and infected cells. Interacts with host BCAP31 (via C-terminus); this interaction is direct. Post-translationally, four species of SH have been detected in infected cell cytoplasm: a 7.5 kDa non-glycosylated form (SH0), a 13-15 kDa form that contains one or two N-linked carbohydrate side chains of the high-mannose type (SHg), a 21-30 kDa polylactosaminoglycan-modified form of the protein (SHp), and the isoform generated by alternative translational initiation. Of these different forms, SH0 is by far the most abundant protein detected during virus infection. In terms of processing, tyrosine phosphorylated.

The protein resides in the virion membrane. It localises to the host cell membrane. The protein localises to the host Golgi apparatus membrane. It is found in the host endoplasmic reticulum membrane. Its activity is regulated as follows. Channel activity is inhibited by copper. Also inhibited by small-molecule pyronin B. Its function is as follows. Viroporin that forms a homopentameric ion channel displaying low ion selectivity. May play a role in virus morphogenesis and pathogenicity at various stages of the viral life cycle. Accumulates at the membrane of the Golgi apparatus in infected cells and may facilitate virus release by modifying the secretory pathway. May enhance host membrane permeability and disrupt cellular ion homeostasis, which can be sensed as damage-associated molecular patterns/danger signals, triggering NLRP3 inflammasome activation and inflammatory immune response. Also inhibits host TNFA-mediated signaling pathway and may delay apoptosis, allowing time for the virus to replicate. This Homo sapiens (Human) protein is Small hydrophobic protein.